The following is a 138-amino-acid chain: Acidic phospholipase A2 BthA-1 (138 aa).

The signal sequence occupies residues 1–16 (MRTLWIMAVLLVGVEG). 7 cysteine pairs are disulfide-bonded: cysteine 42-cysteine 131, cysteine 44-cysteine 60, cysteine 59-cysteine 111, cysteine 65-cysteine 138, cysteine 66-cysteine 104, cysteine 73-cysteine 97, and cysteine 91-cysteine 102. Residues tyrosine 43, glycine 47, and glycine 48 each contribute to the Ca(2+) site. Histidine 63 is an active-site residue. Residue aspartate 64 coordinates Ca(2+). The active site involves aspartate 105.

Belongs to the phospholipase A2 family. Group II subfamily. D49 sub-subfamily. As to quaternary structure, homodimer; non-covalently linked. Ca(2+) is required as a cofactor. In terms of tissue distribution, expressed by the venom gland.

The protein localises to the secreted. The enzyme catalyses a 1,2-diacyl-sn-glycero-3-phosphocholine + H2O = a 1-acyl-sn-glycero-3-phosphocholine + a fatty acid + H(+). With respect to regulation, inhibited by EDTA and bromophenacyl bromide (BPB). Functionally, snake venom phospholipase A2 (PLA2) that displays edema-inducing activities (activity that is inhibited by EDTA and dexamethasone), inhibits phospholipid-dependent collagen/ADP-induced platelet aggregation, possess hypotensive as well as anticoagulant activities. In addition, this enzyme shows bactericidal activity against E.coli and S.aureus. PLA2 catalyzes the calcium-dependent hydrolysis of the 2-acyl groups in 3-sn-phosphoglycerides. The protein is Acidic phospholipase A2 BthA-1 of Bothrops jararacussu (Jararacussu).